A 223-amino-acid chain; its full sequence is Sigma non-opioid intracellular receptor 1 (223 aa).

Topologically, residues 1 to 9 are lumenal; that stretch reads MPWAAGRRW. A targeting to endoplasmic reticulum-associated lipid droplets region spans residues 2 to 8; the sequence is PWAAGRR. Residues 10 to 30 traverse the membrane as a helical segment; that stretch reads AWITLILTIIAVLIQAAWLWL. At 31 to 223 the chain is on the cytoplasmic side; sequence GTQNFVFSRE…LTTYLFGQDS (193 aa). An important for ligand-binding region spans residues 99 to 106; the sequence is SLSEYVLL. Residues 177–223 are C-terminal hydrophobic region; the sequence is VIPSTLFFALADTFFSTQDYLTLFYTLRAYARGLRLELTTYLFGQDS.

It belongs to the ERG2 family. Homotrimer. Interacts with KCNA4. Interacts with KCNA2; cocaine consumption leads to increased interaction. Forms a ternary complex with ANK2 and ITPR3. The complex is disrupted by agonists. Interacts with RNF112 in an oxidative stress-regulated manner. Widely expressed with higher expression in liver, brain, kidney and thymus. Expressed throughout the brain with higher expression within cerebral cortex, hippocampus and cerebellum. Within the hippocampus expressed in cornu ammonis pyramidal neurons, the granular cells of the dentate gyrus as well as interneurons. Within the cerebellum, expressed in Purkinje cell bodies. Highly expressed in the brainstem and motor neurons of the spinal cord. Expressed by neural retina, retinal pigment epithelial cells and lens.

It localises to the nucleus inner membrane. It is found in the nucleus outer membrane. The protein localises to the nucleus envelope. The protein resides in the cytoplasmic vesicle. Its subcellular location is the endoplasmic reticulum membrane. It localises to the membrane. It is found in the lipid droplet. The protein localises to the cell junction. The protein resides in the cell membrane. Its subcellular location is the cell projection. It localises to the growth cone. It is found in the postsynaptic density membrane. Functionally, functions in lipid transport from the endoplasmic reticulum and is involved in a wide array of cellular functions probably through regulation of the biogenesis of lipid microdomains at the plasma membrane. Involved in the regulation of different receptors it plays a role in BDNF signaling and EGF signaling. Also regulates ion channels like the potassium channel and could modulate neurotransmitter release. Plays a role in calcium signaling through modulation together with ANK2 of the ITP3R-dependent calcium efflux at the endoplasmic reticulum. Plays a role in several other cell functions including proliferation, survival and death. Originally identified for its ability to bind various psychoactive drugs it is involved in learning processes, memory and mood alteration. Necessary for proper mitochondrial axonal transport in motor neurons, in particular the retrograde movement of mitochondria. Plays a role in protecting cells against oxidative stress-induced cell death via its interaction with RNF112. This chain is Sigma non-opioid intracellular receptor 1 (Sigmar1), found in Mus musculus (Mouse).